The sequence spans 163 residues: Transcriptional repressor NrdR (163 aa).

A disordered region spans residues 1–22; sequence MRCPKCQSLKSSVIDSRQAEDG. The segment at 3-34 is a zinc-finger region; it reads CPKCQSLKSSVIDSRQAEDGNTIRRRRSCDQC. The 91-residue stretch at 49-139 folds into the ATP-cone domain; sequence LVVVKKDGTR…VYRSFKDVGE (91 aa).

It belongs to the NrdR family. Zn(2+) is required as a cofactor.

Negatively regulates transcription of bacterial ribonucleotide reductase nrd genes and operons by binding to NrdR-boxes. The protein is Transcriptional repressor NrdR of Streptococcus suis (strain 98HAH33).